The chain runs to 169 residues: Small ribosomal subunit protein uS9 (169 aa).

Disordered stretches follow at residues methionine 1–proline 29 and methionine 128–arginine 169. The segment covering aspartate 9–proline 21 has biased composition (acidic residues). Basic residues predominate over residues valine 150 to arginine 169.

The protein belongs to the universal ribosomal protein uS9 family.

The chain is Small ribosomal subunit protein uS9 from Thermobifida fusca (strain YX).